A 115-amino-acid polypeptide reads, in one-letter code: Large ribosomal subunit protein bL19 (115 aa).

Belongs to the bacterial ribosomal protein bL19 family.

In terms of biological role, this protein is located at the 30S-50S ribosomal subunit interface and may play a role in the structure and function of the aminoacyl-tRNA binding site. The sequence is that of Large ribosomal subunit protein bL19 from Coxiella burnetii (strain CbuK_Q154) (Coxiella burnetii (strain Q154)).